The sequence spans 155 residues: UPF0178 protein TDE_2151 (155 aa).

The protein belongs to the UPF0178 family.

The sequence is that of UPF0178 protein TDE_2151 from Treponema denticola (strain ATCC 35405 / DSM 14222 / CIP 103919 / JCM 8153 / KCTC 15104).